The chain runs to 65 residues: uncharacterized protein (65 aa).

This is an uncharacterized protein from Acheta domesticus (House cricket).